The chain runs to 391 residues: Probable sugar efflux transporter (391 aa).

The next 12 helical transmembrane spans lie at 16-36 (VFVF…PVAL), 51-71 (VGLM…PLML), 82-102 (LLFL…AWNF), 110-130 (MGIA…VIRV), 138-158 (QALG…LPLG), 170-190 (TFGV…KLLP), 210-230 (PLLV…FTTY), 247-267 (ITTL…FLFG), 277-297 (FIAF…VFKN), 300-320 (WVIF…TIAL), 338-358 (IFSG…SIVI), and 361-381 (LGLE…LFWL).

This sequence belongs to the major facilitator superfamily. SotB (TC 2.A.1.2) family.

It localises to the cell inner membrane. In terms of biological role, involved in the efflux of sugars. The physiological role may be the reduction of the intracellular concentration of toxic sugars or sugar metabolites. In Helicobacter pylori (strain J99 / ATCC 700824) (Campylobacter pylori J99), this protein is Probable sugar efflux transporter.